Consider the following 190-residue polypeptide: MADSLIQSPDLGDVTGYLRDRIRTVPDWPMPGVQFRDITPLLQNPKTLRVLIDVFVHRYMDAQLDLVAGIDARGFILGAIVAYELNLGFVPIRKKGKLPFQTVAEEYELEYGSATVEIHADACKPGDRVLLIDDLIATGGTMMAGRKLLERLGATVVEGAAIVDLPELGGSKLLQNAGLPLFTVCRFDGH.

This sequence belongs to the purine/pyrimidine phosphoribosyltransferase family. As to quaternary structure, homodimer.

It is found in the cytoplasm. It catalyses the reaction AMP + diphosphate = 5-phospho-alpha-D-ribose 1-diphosphate + adenine. It participates in purine metabolism; AMP biosynthesis via salvage pathway; AMP from adenine: step 1/1. Functionally, catalyzes a salvage reaction resulting in the formation of AMP, that is energically less costly than de novo synthesis. In Cupriavidus pinatubonensis (strain JMP 134 / LMG 1197) (Cupriavidus necator (strain JMP 134)), this protein is Adenine phosphoribosyltransferase.